We begin with the raw amino-acid sequence, 812 residues long: Valine--tRNA ligase (812 aa).

A 'HIGH' region motif is present at residues 47-57 (PTISGQLHIGH). Positions 536 to 540 (KMSKS) match the 'KMSKS' region motif. Lys539 contacts ATP.

This sequence belongs to the class-I aminoacyl-tRNA synthetase family. ValS type 2 subfamily. As to quaternary structure, monomer.

It localises to the cytoplasm. It carries out the reaction tRNA(Val) + L-valine + ATP = L-valyl-tRNA(Val) + AMP + diphosphate. Catalyzes the attachment of valine to tRNA(Val). As ValRS can inadvertently accommodate and process structurally similar amino acids such as threonine, to avoid such errors, it has a 'posttransfer' editing activity that hydrolyzes mischarged Thr-tRNA(Val) in a tRNA-dependent manner. This Ehrlichia ruminantium (strain Gardel) protein is Valine--tRNA ligase.